Reading from the N-terminus, the 385-residue chain is MKALQFGAGNIGRGFIGKTLSESGFSVIFSDVNQNIVDAINYNREYFVKIIGSNQNKTVNIKRVSAINSNDSNIKKIISSVDLITTAVGPTALEKIALIITQGIIFKIKNQFTKPLNIIACENKIKSSSFLKQVVLKNLPIKYHDYLNKYIGFIDCSIDTIIPSINNKDDLFLTVEEFKEWIVNINQFKGAVPKIVDMKFSNNLDAFIERKLFTLNTGHAIAAYLGLIKNYKTIQDAISDKKIRVIVRSAMEESGSVLIKRYNFNKNDHLDYIEKIFLRFENPFLSDKLERIGRNPLQKLRREDRLIKPFLGAFEYNLPYSNLAKGIAAAFYYHNKNDLESIELSSSIKKQGLESTIIKICDLPVNSKEVYSIILEYNLIKKIIR.

An NAD(+)-binding site is contributed by 3 to 14 (ALQFGAGNIGRG).

It belongs to the mannitol dehydrogenase family.

It carries out the reaction D-mannitol 1-phosphate + NAD(+) = beta-D-fructose 6-phosphate + NADH + H(+). In Buchnera aphidicola subsp. Acyrthosiphon pisum (strain Tuc7), this protein is Mannitol-1-phosphate 5-dehydrogenase.